The sequence spans 887 residues: Alanine--tRNA ligase (887 aa).

Zn(2+) is bound by residues histidine 575, histidine 579, cysteine 677, and histidine 681.

Belongs to the class-II aminoacyl-tRNA synthetase family. The cofactor is Zn(2+).

It is found in the cytoplasm. The catalysed reaction is tRNA(Ala) + L-alanine + ATP = L-alanyl-tRNA(Ala) + AMP + diphosphate. Functionally, catalyzes the attachment of alanine to tRNA(Ala) in a two-step reaction: alanine is first activated by ATP to form Ala-AMP and then transferred to the acceptor end of tRNA(Ala). Also edits incorrectly charged Ser-tRNA(Ala) and Gly-tRNA(Ala) via its editing domain. This Geobacillus kaustophilus (strain HTA426) protein is Alanine--tRNA ligase.